We begin with the raw amino-acid sequence, 317 residues long: Transaldolase (317 aa).

Lys-126 serves as the catalytic Schiff-base intermediate with substrate.

The protein belongs to the transaldolase family. Type 1 subfamily. In terms of assembly, homodimer.

It is found in the cytoplasm. The catalysed reaction is D-sedoheptulose 7-phosphate + D-glyceraldehyde 3-phosphate = D-erythrose 4-phosphate + beta-D-fructose 6-phosphate. The protein operates within carbohydrate degradation; pentose phosphate pathway; D-glyceraldehyde 3-phosphate and beta-D-fructose 6-phosphate from D-ribose 5-phosphate and D-xylulose 5-phosphate (non-oxidative stage): step 2/3. In terms of biological role, transaldolase is important for the balance of metabolites in the pentose-phosphate pathway. This is Transaldolase from Burkholderia multivorans (strain ATCC 17616 / 249).